Here is a 275-residue protein sequence, read N- to C-terminus: Leucine-rich repeat-containing protein 3C (275 aa).

An N-terminal signal peptide occupies residues 1-41 (MRMTSSSFVSYCTPGLCQFMAMLPTAGHLLPLLLVIGTGGT). In terms of domain architecture, LRRNT spans 42 to 79 (VPSPQVPPRGCYVAKEAGERTFRCSQAGLSAVPSGIPN). 3 LRR repeats span residues 80 to 101 (DTRK…AFQH), 104 to 125 (VLEE…AFQG), and 129 to 150 (TLRH…AFVG). A glycan (N-linked (GlcNAc...) asparagine) is linked at Asn-156. Positions 160–212 (NPWHCDCALQEVLRQVRLVPGTGTGIVCGSGARPDLVGQEFLLLAGEEELCGS) constitute an LRRCT domain. Residues 225–245 (LLVTMGGWLTLMVAYLVHYVW) traverse the membrane as a helical segment.

The protein belongs to the LRRC3 family.

The protein localises to the membrane. This Homo sapiens (Human) protein is Leucine-rich repeat-containing protein 3C (LRRC3C).